Consider the following 140-residue polypeptide: Large ribosomal subunit protein uL11 (140 aa).

The protein belongs to the universal ribosomal protein uL11 family. As to quaternary structure, part of the ribosomal stalk of the 50S ribosomal subunit. Interacts with L10 and the large rRNA to form the base of the stalk. L10 forms an elongated spine to which L12 dimers bind in a sequential fashion forming a multimeric L10(L12)X complex. In terms of processing, one or more lysine residues are methylated.

Functionally, forms part of the ribosomal stalk which helps the ribosome interact with GTP-bound translation factors. The chain is Large ribosomal subunit protein uL11 from Thermoanaerobacter pseudethanolicus (strain ATCC 33223 / 39E) (Clostridium thermohydrosulfuricum).